The chain runs to 494 residues: Probable cytosol aminopeptidase (494 aa).

The Mn(2+) site is built by Lys260 and Asp265. Residue Lys272 is part of the active site. The Mn(2+) site is built by Asp283, Asp342, and Glu344. Arg346 is an active-site residue.

Belongs to the peptidase M17 family. Requires Mn(2+) as cofactor.

It is found in the cytoplasm. It catalyses the reaction Release of an N-terminal amino acid, Xaa-|-Yaa-, in which Xaa is preferably Leu, but may be other amino acids including Pro although not Arg or Lys, and Yaa may be Pro. Amino acid amides and methyl esters are also readily hydrolyzed, but rates on arylamides are exceedingly low.. The enzyme catalyses Release of an N-terminal amino acid, preferentially leucine, but not glutamic or aspartic acids.. Its function is as follows. Presumably involved in the processing and regular turnover of intracellular proteins. Catalyzes the removal of unsubstituted N-terminal amino acids from various peptides. In Bacillus cereus (strain Q1), this protein is Probable cytosol aminopeptidase.